Consider the following 168-residue polypeptide: RNA annealing protein YRA2 (168 aa).

Residues 40–114 (FRLKITNIGL…KSIQVTLLDQ (75 aa)) form the RRM domain. Residues 113–152 (DQQKRKRDADQERRKLRHGPRGGYGSHYTKSQKPIEQRNK) are disordered.

The protein belongs to the YRA1 family. Associates with mRNPs.

The protein resides in the nucleus. Its function is as follows. Involved in export of poly(A) mRNAs from the nucleus. Recruited to the coding sequences as well as poly-A sites of active genes. This Candida glabrata (strain ATCC 2001 / BCRC 20586 / JCM 3761 / NBRC 0622 / NRRL Y-65 / CBS 138) (Yeast) protein is RNA annealing protein YRA2 (YRA2).